Reading from the N-terminus, the 389-residue chain is Probable family 17 glucosidase SCW10 (389 aa).

The N-terminal stretch at 1-18 (MRFSNFLTVSALLTGALG) is a signal peptide. Residues 19 to 29 (APAVRHKHEKR) constitute a propeptide that is removed on maturation. The disordered stretch occupies residues 70-134 (ASQATTSTLE…SSASSSISAS (65 aa)). Asn-279 is a glycosylation site (N-linked (GlcNAc...) asparagine). Glu-326 (nucleophile) is an active-site residue.

It belongs to the glycosyl hydrolase 17 family. Glycosylated.

Its subcellular location is the secreted. It is found in the cell wall. Its function is as follows. Glucanases possibly play a role in cell expansion during growth, in cell-cell fusion during mating, and in spore release during sporulation. This is Probable family 17 glucosidase SCW10 (SCW10) from Saccharomyces cerevisiae (strain ATCC 204508 / S288c) (Baker's yeast).